We begin with the raw amino-acid sequence, 413 residues long: Putative adhesin P1-like protein MPN_144 (413 aa).

Polar residues-rich tracts occupy residues 1 to 13 (MGQQ…SAGN), 25 to 54 (SGDS…NLTP), and 355 to 376 (SFGT…VFGT). 2 disordered regions span residues 1–60 (MGQQ…DWPN) and 355–413 (SFGT…VSGH). Gly residues predominate over residues 385–399 (LSGGGAGGGSSGSGQ).

It belongs to the adhesin P1 family.

The sequence is that of Putative adhesin P1-like protein MPN_144 from Mycoplasma pneumoniae (strain ATCC 29342 / M129 / Subtype 1) (Mycoplasmoides pneumoniae).